A 177-amino-acid chain; its full sequence is ATP synthase subunit delta (177 aa).

This sequence belongs to the ATPase delta chain family. As to quaternary structure, F-type ATPases have 2 components, F(1) - the catalytic core - and F(0) - the membrane proton channel. F(1) has five subunits: alpha(3), beta(3), gamma(1), delta(1), epsilon(1). F(0) has three main subunits: a(1), b(2) and c(10-14). The alpha and beta chains form an alternating ring which encloses part of the gamma chain. F(1) is attached to F(0) by a central stalk formed by the gamma and epsilon chains, while a peripheral stalk is formed by the delta and b chains.

The protein resides in the cell inner membrane. In terms of biological role, f(1)F(0) ATP synthase produces ATP from ADP in the presence of a proton or sodium gradient. F-type ATPases consist of two structural domains, F(1) containing the extramembraneous catalytic core and F(0) containing the membrane proton channel, linked together by a central stalk and a peripheral stalk. During catalysis, ATP synthesis in the catalytic domain of F(1) is coupled via a rotary mechanism of the central stalk subunits to proton translocation. Its function is as follows. This protein is part of the stalk that links CF(0) to CF(1). It either transmits conformational changes from CF(0) to CF(1) or is implicated in proton conduction. The sequence is that of ATP synthase subunit delta from Shewanella oneidensis (strain ATCC 700550 / JCM 31522 / CIP 106686 / LMG 19005 / NCIMB 14063 / MR-1).